A 610-amino-acid chain; its full sequence is Fimbrin (610 aa).

2 EF-hand domains span residues 7 to 42 (SEISEFKASFNQFDENGDGQISALELQKILTKCGEK) and 43 to 78 (VTGVEVRDMIKEVDTDGNGSIDFKEFLQVMQKARQH). The Ca(2+) site is built by Asp20, Asn22, Asp24, Gln26, Glu31, Asp56, Asp58, Asn60, Ser62, and Glu67. 2 actin-binding regions span residues 102–365 (YSGS…NTHP) and 366–608 (ALEP…QVEM). Calponin-homology (CH) domains are found at residues 116-232 (DEEK…KIGL), 260-365 (LPVE…NTHP), 379-488 (TREE…RGHV), and 501-608 (PIAD…QVEM).

In terms of biological role, binds to actin. This Dictyostelium discoideum (Social amoeba) protein is Fimbrin (fimA).